The following is a 462-amino-acid chain: Argininosuccinate lyase (462 aa).

The protein belongs to the lyase 1 family. Argininosuccinate lyase subfamily.

Its subcellular location is the cytoplasm. The catalysed reaction is 2-(N(omega)-L-arginino)succinate = fumarate + L-arginine. Its pathway is amino-acid biosynthesis; L-arginine biosynthesis; L-arginine from L-ornithine and carbamoyl phosphate: step 3/3. The chain is Argininosuccinate lyase from Streptococcus agalactiae serotype V (strain ATCC BAA-611 / 2603 V/R).